Consider the following 84-residue polypeptide: Sec-independent protein translocase protein TatA (84 aa).

A helical membrane pass occupies residues 1-21 (MGGISIWQLLIIAVIVILLFG). Positions 40–84 (KKAMSDEDKPADKKDADFEPKNIEQQKTEASAETTAETKKDKEQA) are disordered. Composition is skewed to basic and acidic residues over residues 42 to 66 (AMSDEDKPADKKDADFEPKNIEQQK) and 75 to 84 (AETKKDKEQA).

It belongs to the TatA/E family. The Tat system comprises two distinct complexes: a TatABC complex, containing multiple copies of TatA, TatB and TatC subunits, and a separate TatA complex, containing only TatA subunits. Substrates initially bind to the TatABC complex, which probably triggers association of the separate TatA complex to form the active translocon.

It localises to the cell inner membrane. In terms of biological role, part of the twin-arginine translocation (Tat) system that transports large folded proteins containing a characteristic twin-arginine motif in their signal peptide across membranes. TatA could form the protein-conducting channel of the Tat system. The polypeptide is Sec-independent protein translocase protein TatA (Vibrio atlanticus (strain LGP32) (Vibrio splendidus (strain Mel32))).